The chain runs to 364 residues: Methylthioribose-1-phosphate isomerase (364 aa).

Residues 49 to 51, R89, and Q201 contribute to the substrate site; that span reads RGA. D242 (proton donor) is an active-site residue. 252-253 contacts substrate; that stretch reads NK.

The protein belongs to the eIF-2B alpha/beta/delta subunits family. MtnA subfamily.

It catalyses the reaction 5-(methylsulfanyl)-alpha-D-ribose 1-phosphate = 5-(methylsulfanyl)-D-ribulose 1-phosphate. It participates in amino-acid biosynthesis; L-methionine biosynthesis via salvage pathway; L-methionine from S-methyl-5-thio-alpha-D-ribose 1-phosphate: step 1/6. Functionally, catalyzes the interconversion of methylthioribose-1-phosphate (MTR-1-P) into methylthioribulose-1-phosphate (MTRu-1-P). The sequence is that of Methylthioribose-1-phosphate isomerase from Leptospira interrogans serogroup Icterohaemorrhagiae serovar copenhageni (strain Fiocruz L1-130).